The chain runs to 245 residues: Galectin-3 (245 aa).

A disordered region spans residues 1 to 30 (MADGFSLNDALAGSGNPNPQGWPGAWGNQP). Residue Ala-2 is modified to N-acetylalanine. Ser-6 carries the post-translational modification Phosphoserine; by CK1. Repeat copies occupy residues 35 to 43 (YPGASYPGA), 44 to 52 (YPGQAPPGA), 53 to 61 (YPGQAPPGA), and 62 to 70 (YPGPTAPGA). The 7 X 9 AA tandem repeats of Y-P-G-X(3)-P-[GS]-A stretch occupies residues 35–99 (YPGASYPGAY…PSAPGAYPAA (65 aa)). The segment at 47 to 68 (QAPPGAYPGQAPPGAYPGPTAP) is disordered. The 5; approximate repeat unit spans residues 71–78 (YPGPAPGA). A 6; approximate repeat occupies 79 to 88 (YPGQPGASGA). The 7; approximate repeat unit spans residues 89–99 (YPSAPGAYPAA). One can recognise a Galectin domain in the interval 113 to 243 (YKLPLAGGVM…DITLTSAAPT (131 aa)). Position 176–182 (176–182 (WGREERQ)) interacts with a beta-D-galactoside. The residue at position 183 (Ser-183) is a Phosphoserine. The Nuclear export signal signature appears at 221 to 236 (KNLREINQMEISGDIT).

In terms of assembly, probably forms homo- or heterodimers. Interacts with DMBT1. Interacts with CD6 and ALCAM. Forms a complex with the ITGA3, ITGB1 and CSPG4. Interacts with LGALS3BP, LYPD3, ZFTRAF1 and UACA. Interacts with TRIM16; this interaction mediates autophagy of damage endomembranes. Interacts with cargo receptor TMED10; the interaction mediates the translocation from the cytoplasm into the ERGIC (endoplasmic reticulum-Golgi intermediate compartment) and thereby secretion. Interacts with and inhibits by binding NCR3/NKp30.

The protein localises to the cytoplasm. It is found in the nucleus. Its subcellular location is the secreted. Galactose-specific lectin which binds IgE. May mediate with the alpha-3, beta-1 integrin the stimulation by CSPG4 of endothelial cells migration. Together with DMBT1, required for terminal differentiation of columnar epithelial cells during early embryogenesis. In the nucleus: acts as a pre-mRNA splicing factor. Involved in acute inflammatory responses including neutrophil activation and adhesion, chemoattraction of monocytes macrophages, opsonization of apoptotic neutrophils, and activation of mast cells. Together with TRIM16, coordinates the recognition of membrane damage with mobilization of the core autophagy regulators ATG16L1 and BECN1 in response to damaged endomembranes. When secreted, interacts with NK cell-activating receptor NCR3/NKp30 acting as an inhibitory ligand which antagonizes NK cell attack. This chain is Galectin-3 (LGALS3), found in Cricetulus longicaudatus (Long-tailed dwarf hamster).